The following is a 64-amino-acid chain: MRLHHLLLVLFFLVLSAGSGFTQGIRSRRSCHRNKGVCALTRCPRNMRQIGTCFGPPVKCCRKK.

Positions 1-20 are cleaved as a signal peptide; it reads MRLHHLLLVLFFLVLSAGSG. The propeptide occupies 21-26; the sequence is FTQGIR. Disulfide bonds link Cys-31–Cys-60, Cys-38–Cys-53, and Cys-43–Cys-61.

Belongs to the beta-defensin family. As to quaternary structure, monomer. Homodimer.

Its subcellular location is the secreted. It is found in the membrane. Its function is as follows. Has bactericidal activity. May act as a ligand for C-C chemokine receptor CCR6. Positively regulates the sperm motility and bactericidal activity in a CCR6-dependent manner. Binds to CCR6 and triggers Ca2+ mobilization in the sperm which is important for its motility. In Capra hircus (Goat), this protein is Beta-defensin 1 (DEFB1).